The following is a 318-amino-acid chain: Extracellular metalloprotease AO090012001025 (318 aa).

A signal peptide spans 1–23 (MSHFPTLHILILVIANLQIQCFA). N-linked (GlcNAc...) asparagine glycosylation is found at Asn106, Asn121, and Asn193. His229 lines the Zn(2+) pocket. The active site involves Glu230. His233 contacts Zn(2+). Cys268 and Cys295 are oxidised to a cystine.

This sequence belongs to the peptidase M43B family.

It is found in the secreted. Secreted metalloproteinase that allows assimilation of proteinaceous substrates. This is Extracellular metalloprotease AO090012001025 from Aspergillus oryzae (strain ATCC 42149 / RIB 40) (Yellow koji mold).